Reading from the N-terminus, the 970-residue chain is Transcriptional activator protein DAL81 (970 aa).

Disordered regions lie at residues Met1–Ile44, Asn64–Ser95, and Asp118–Ile140. 3 stretches are compositionally biased toward low complexity: residues Thr15 to Asn41, Gln73 to Gln94, and Ser121 to Ile140. A DNA-binding region (zn(2)-C6 fungal-type) is located at residues Cys150–Cys179. The span at Ser807–Ser823 shows a compositional bias: low complexity. The tract at residues Ser807–Leu970 is disordered. 2 stretches are compositionally biased toward polar residues: residues Arg824–Ile836 and Lys858–His870. Ser833 carries the post-translational modification Phosphoserine. A compositionally biased stretch (low complexity) spans Pro875–Thr894. Over residues Gln895–Glu906 the composition is skewed to polar residues. Positions Thr907 to Asn938 are enriched in basic and acidic residues. 2 stretches are compositionally biased toward polar residues: residues Pro939–Lys954 and Val961–Leu970.

The protein resides in the nucleus. Positive regulation of genes required for catabolism of GABA (UGA4, UGA1, and UGA2), urea (DUR1 and DUR2), arginine and allantoin. The chain is Transcriptional activator protein DAL81 (DAL81) from Saccharomyces cerevisiae (strain ATCC 204508 / S288c) (Baker's yeast).